The chain runs to 158 residues: Transcription antitermination protein NusB (158 aa).

Residues 1–12 show a composition bias toward basic and acidic residues; the sequence is MKRVEKRAEKQG. The tract at residues 1 to 20 is disordered; sequence MKRVEKRAEKQGRGTARKSR.

This sequence belongs to the NusB family.

Its function is as follows. Involved in transcription antitermination. Required for transcription of ribosomal RNA (rRNA) genes. Binds specifically to the boxA antiterminator sequence of the ribosomal RNA (rrn) operons. The polypeptide is Transcription antitermination protein NusB (Nitrosospira multiformis (strain ATCC 25196 / NCIMB 11849 / C 71)).